The chain runs to 302 residues: Trans-4-hydroxy-L-proline dehydratase activating enzyme (302 aa).

Residues 14–297 form the Radical SAM core domain; sequence HDGPGIRSTV…KRLFEASNFN (284 aa). Cys28, Cys32, Cys35, Cys54, Cys57, Cys60, and Cys93 together coordinate [4Fe-4S] cluster. 34–36 is an S-adenosyl-L-methionine binding site; sequence WCH. 2 4Fe-4S ferredoxin-type domains span residues 45 to 74 and 75 to 103; these read KQVLYNEERCSKCEACINICPHKAIYKGET and KICLDQDKCEFCETCLDYCVNNAREIVGQ. Residues Gly133, 183 to 185, and His257 contribute to the S-adenosyl-L-methionine site; that span reads DIK.

Belongs to the organic radical-activating enzymes family. [4Fe-4S] cluster serves as cofactor.

It carries out the reaction glycyl-[protein] + reduced [flavodoxin] + S-adenosyl-L-methionine = glycin-2-yl radical-[protein] + semiquinone [flavodoxin] + 5'-deoxyadenosine + L-methionine + H(+). Functionally, catalyzes activation of the trans-4-hydroxy-L-proline dehydratase under anaerobic conditions by generation of an organic free radical on a glycine residue, via a homolytic cleavage of S-adenosyl-L-methionine (SAM). Is involved in the anaerobic degradation of 4-hydroxyproline. The polypeptide is Trans-4-hydroxy-L-proline dehydratase activating enzyme (Clostridioides difficile (Peptoclostridium difficile)).